Consider the following 290-residue polypeptide: N-acetylmannosamine kinase (290 aa).

ATP is bound by residues 6–13 (ALDIGGTK) and 132–139 (GVGGGIIL). Zn(2+)-binding residues include His-156, Cys-166, Cys-168, and Cys-173.

The protein belongs to the ROK (NagC/XylR) family. NanK subfamily. Homodimer.

It catalyses the reaction an N-acyl-D-mannosamine + ATP = an N-acyl-D-mannosamine 6-phosphate + ADP + H(+). It functions in the pathway amino-sugar metabolism; N-acetylneuraminate degradation; D-fructose 6-phosphate from N-acetylneuraminate: step 2/5. In terms of biological role, catalyzes the phosphorylation of N-acetylmannosamine (ManNAc) to ManNAc-6-P. In Yersinia pestis (strain Pestoides F), this protein is N-acetylmannosamine kinase.